The sequence spans 239 residues: MKIDILTLFPEMFAPLEHSIVGKAKEKGLLDIHYHNFRDYAEKARHVDDEPYGGGQGMLLRAQPIFDTIEQIEAKKPRIILLDPAGKPFTQAYAEELALEEELIFICGHYEGYDERIKTLVTDEISLGDFVLTGGELAAMTIVDATVRLIPQVLGKESSHQDDSFSSGLLEYPQYTRPYDYRGMTVPDVLMSGHHERIRLWRLEESLRKTYLRRPDLLERYDFSEEERKLLDKIKEALG.

Residues glycine 108 and leucine 127–leucine 132 each bind S-adenosyl-L-methionine.

It belongs to the RNA methyltransferase TrmD family. Homodimer.

It localises to the cytoplasm. The catalysed reaction is guanosine(37) in tRNA + S-adenosyl-L-methionine = N(1)-methylguanosine(37) in tRNA + S-adenosyl-L-homocysteine + H(+). Functionally, specifically methylates guanosine-37 in various tRNAs. The sequence is that of tRNA (guanine-N(1)-)-methyltransferase from Streptococcus pyogenes serotype M6 (strain ATCC BAA-946 / MGAS10394).